We begin with the raw amino-acid sequence, 1813 residues long: Latent-transforming growth factor beta-binding protein 2 (1813 aa).

The first 35 residues, 1–35 (MRAPTTARCSGCIQRVRWRGFLPLVLAVLMGTSHA), serve as a signal peptide directing secretion. Residues 94-115 (NPGWLAEAEARRPPRTQQLRRV) are heparin-binding. The tract at residues 103–152 (ARRPPRTQQLRRVQPPVQTRRSHPRGQQQIAARAAPSVARLETPQRPAAA) is disordered. Polar residues predominate over residues 108–132 (RTQQLRRVQPPVQTRRSHPRGQQQI). A glycan (N-linked (GlcNAc...) asparagine) is linked at N175. The region spanning 181–213 (IKPVCQPPCQNRGSCSRPQVCICRSGFRGARCE) is the EGF-like 1 domain. Cystine bridges form between C185–C195, C189–C201, and C203–C212. The segment at 220–305 (EFDPQNARPV…QLMSNALPSG (86 aa)) is disordered. Positions 226–243 (ARPVPRRSVERAPGPHRS) are heparin-binding. Positions 257–266 (LVPPPSPPPS) are enriched in pro residues. Residues 293–302 (ANGQLMSNAL) show a composition bias toward polar residues. N328 is a glycosylation site (N-linked (GlcNAc...) asparagine). 329 to 339 (LTEKIKKIKVV) serves as a coordination point for heparin. Residues 381-413 (RIYFCQIPCLNGGRCIGRDECWCPANSTGKFCH) form the EGF-like 2 domain. Cystine bridges form between C385–C395, C389–C401, and C403–C412. Residue N406 is glycosylated (N-linked (GlcNAc...) asparagine). S491 is modified (phosphoserine). The interval 492–524 (VETRASHRPHGNLGHSPWASNSIPARAGEAPRP) is disordered. Residues 536–588 (GQCYLSTVNGQCANPLGSLTSQEDCCGSVGTFWGVTSCAPCPPRQEGPAFPVI) enclose the TB 1 domain. 3 disulfide bridges follow: C538-C560, C547-C573, and C561-C576. N-linked (GlcNAc...) asparagine glycosylation occurs at N603. Positions 609–649 (DINECLTLGLCKDSECVNTRGSYLCTCRPGLMLDPSRSRCV) constitute an EGF-like 3; calcium-binding domain. Intrachain disulfides connect C613–C624, C619–C633, C635–C648, C661–C683, C670–C696, C684–C699, and C685–C711. Residues 659–711 (GLCYRSLGSGTCTLPLVHRITKQICCCSRVGKAWGSTCEQCPLPGTEAFREIC) enclose the TB 2 domain. 2 disordered regions span residues 730-761 (KAEEEELASPLREQTEQSTAPPPGQAERQPLR) and 787-819 (SAPHLPARVPGDATGRPAPSLPGQGIPESPAEE). One can recognise an EGF-like 4 domain in the interval 835–877 (DFDPCFAGASNICGPGTCVSLPNGYRCVCSPGYQLHPSQDYCT). 49 disulfides stabilise this stretch: C839–C852, C847–C861, C863–C876, C882–C893, C887–C902, C904–C919, C925–C936, C931–C945, C947–C959, C965–C976, C971–C985, C988–C999, C1005–C1016, C1011–C1025, C1027–C1040, C1046–C1057, C1052–C1066, C1069–C1082, C1088–C1099, C1094–C1108, C1111–C1124, C1130–C1142, C1137–C1151, C1153–C1165, C1171–C1183, C1177–C1192, C1194–C1207, C1213–C1224, C1219–C1233, C1235–C1249, C1255–C1268, C1263–C1277, C1281–C1293, C1299–C1311, C1305–C1320, C1322–C1335, C1341–C1353, C1348–C1362, C1364–C1378, C1405–C1428, C1415–C1440, C1429–C1443, C1430–C1455, C1481–C1494, C1489–C1503, C1505–C1518, C1524–C1534, C1529–C1543, and C1545–C1558. An EGF-like 5; calcium-binding domain is found at 878-920 (DDNECMRNPCEGRGRCVNSVGSYSCLCYPGYTLVTLGDTQECQ). The EGF-like 6; calcium-binding domain maps to 921–960 (DIDECEQPGVCSGGRCSNTEGSYHCECDRGYIMVRKGHCQ). The EGF-like 7; calcium-binding domain maps to 961 to 1000 (DINECRHPGTCPDGRCVNSPGSYTCLACEEGYVGQSGSCV). The region spanning 1001-1041 (DVNECLTPGICTHGRCINMEGSFRCSCEPGYEVTPDKKGCR) is the EGF-like 8; calcium-binding domain. Residues 1042-1083 (DVDECASRASCPTGLCLNTEGSFTCSACQSGYWVNEDGTACE) form the EGF-like 9; calcium-binding domain. The 42-residue stretch at 1084–1125 (DLDECAFPGVCPTGVCTNTVGSFSCKDCDQGYRPNPLGNRCE) folds into the EGF-like 10; calcium-binding domain. The region spanning 1126–1166 (DVDECEGPQSSCRGGECKNTEGSYQCLCHQGFQLVNGTMCE) is the EGF-like 11; calcium-binding domain. A glycan (N-linked (GlcNAc...) asparagine) is linked at N1161. Residues 1167–1208 (DVNECVGEEHCAPHGECLNSLGSFFCLCAPGFASAEGGTRCQ) form the EGF-like 12; calcium-binding domain. Residues 1209-1250 (DVDECAATDPCPGGHCVNTEGSFSCLCETASFQPSPDSGECL) enclose the EGF-like 13; calcium-binding domain. The EGF-like 14; calcium-binding domain maps to 1251–1294 (DIDECEDREDPVCGAWRCENSPGSYRCILDCQPGFYVAPNGDCI). Positions 1295 to 1336 (DIDECANDTVCGNHGFCDNTDGSFRCLCDQGFETSPSGWECV) constitute an EGF-like 15; calcium-binding domain. Residue N1301 is glycosylated (N-linked (GlcNAc...) asparagine). An EGF-like 16; calcium-binding domain is found at 1337 to 1379 (DVNECELMMAVCGDALCENVEGSFLCLCASDLEEYDAEEGHCR). Positions 1403–1455 (MECYSEHNGGPPCSQILGQNSTQAECCCTQGARWGKACAPCPSEDSVEFSQLC) constitute a TB 3 domain. An N-linked (GlcNAc...) asparagine glycan is attached at N1422. One can recognise an EGF-like 17; calcium-binding domain in the interval 1477-1519 (DADECVLFGPALCQNGRCSNIVPGYICLCNPGYHYDASSRKCQ). Positions 1520-1559 (DHNECQDLACENGECVNQEGSFHCLCNPPLTLDLSGQRCV) constitute an EGF-like 18; calcium-binding domain. N-linked (GlcNAc...) asparagine glycosylation is present at N1560. The TB 4 domain occupies 1576-1628 (DICWKKVTNDVCSQPLRGHHTTYTECCCQDGEAWSQQCALCPPRSSEVYAQLC). Intrachain disulfides connect C1578–C1601, C1587–C1613, C1602–C1616, and C1603–C1628. The segment at 1631–1813 (ARIEAERGAG…PGPPHCAAKE (183 aa)) is C-terminal domain. Residues 1671–1717 (YLGPEDTAPEPPFSNPASQPGDNTPVLEPPLQPSELQPHYLASHSEP) form a disordered region. Residues 1725-1765 (QAEECGILNGCENGRCVRVREGYTCDCFEGFQLDAPTLACV) form the EGF-like 19; calcium-binding domain. Cystine bridges form between C1729–C1740, C1735–C1749, C1751–C1764, C1770–C1785, C1780–C1794, and C1796–C1809. The 45-residue stretch at 1766–1810 (DVNECEDLNGPARLCAHGHCENTEGSYRCHCSPGYVAEPGPPHCA) folds into the EGF-like 20; calcium-binding domain.

This sequence belongs to the LTBP family. Forms part of the large latent transforming growth factor beta precursor complex; removal is essential for activation of complex. Interacts with SDC4. Interacts (via C-terminal domain) with FBN1 (via N-terminal domain) in a Ca(+2)-dependent manner. N-Glycosylated. In terms of processing, contains hydroxylated asparagine residues. Expressed in the anterior chamber of the eye.

It localises to the secreted. Its subcellular location is the extracellular space. It is found in the extracellular matrix. May play an integral structural role in elastic-fiber architectural organization and/or assembly. This Mus musculus (Mouse) protein is Latent-transforming growth factor beta-binding protein 2 (Ltbp2).